The primary structure comprises 131 residues: Profilin-6 (131 aa).

It belongs to the profilin family. As to quaternary structure, occurs in many kinds of cells as a complex with monomeric actin in a 1:1 ratio.

The protein localises to the cytoplasm. It is found in the cytoskeleton. Binds to actin and affects the structure of the cytoskeleton. At high concentrations, profilin prevents the polymerization of actin, whereas it enhances it at low concentrations. By binding to PIP2, it inhibits the formation of IP3 and DG. The protein is Profilin-6 of Hevea brasiliensis (Para rubber tree).